A 260-amino-acid chain; its full sequence is tRNA pseudouridine synthase A (260 aa).

The active-site Nucleophile is Asp-51. Residue Tyr-109 coordinates substrate.

It belongs to the tRNA pseudouridine synthase TruA family. As to quaternary structure, homodimer.

It carries out the reaction uridine(38/39/40) in tRNA = pseudouridine(38/39/40) in tRNA. Formation of pseudouridine at positions 38, 39 and 40 in the anticodon stem and loop of transfer RNAs. This chain is tRNA pseudouridine synthase A, found in Albidiferax ferrireducens (strain ATCC BAA-621 / DSM 15236 / T118) (Rhodoferax ferrireducens).